A 420-amino-acid chain; its full sequence is Bicoumarin synthase ktnC (420 aa).

Cys-362 provides a ligand contact to heme.

Belongs to the cytochrome P450 family. It depends on heme as a cofactor.

It catalyses the reaction 2 7-demethylsiderin + NADPH + O2 = orlandin + NADP(+) + 2 H2O. Its pathway is secondary metabolite biosynthesis. Its function is as follows. Non-reducing polyketide synthase; part of the gene cluster that mediates the biosynthesis of the bicoumarin kotanin. The non-reducing polyketide synthase ktnS first catalyzes the formation of the pentaketidic 4,7-dihydroxy-5-methylcoumarin from acetyl coenzyme A and 4 malonyl coenzyme A molecules. Further O-methylation by ktnB leads to the formation of 7-demethylsiderin. Then, an oxidative phenol coupling catalyzed by the cytochrome P450 monooxygenase ktnC forms the 8,8'-dimer P-orlandin via dimerization the monomeric precursor, 7-demethylsiderin. P-orlandin is subsequently O-methylated in a stepwise fashion to demethylkotanin and kotanin. This chain is Bicoumarin synthase ktnC, found in Aspergillus niger (strain ATCC MYA-4892 / CBS 513.88 / FGSC A1513).